We begin with the raw amino-acid sequence, 265 residues long: 3-methyl-2-oxobutanoate hydroxymethyltransferase (265 aa).

2 residues coordinate Mg(2+): D45 and D84. 3-methyl-2-oxobutanoate contacts are provided by residues D45 to S46, D84, and K114. E116 provides a ligand contact to Mg(2+). The active-site Proton acceptor is E183.

Belongs to the PanB family. Homodecamer; pentamer of dimers. Mg(2+) is required as a cofactor.

It localises to the cytoplasm. It catalyses the reaction 3-methyl-2-oxobutanoate + (6R)-5,10-methylene-5,6,7,8-tetrahydrofolate + H2O = 2-dehydropantoate + (6S)-5,6,7,8-tetrahydrofolate. It functions in the pathway cofactor biosynthesis; (R)-pantothenate biosynthesis; (R)-pantoate from 3-methyl-2-oxobutanoate: step 1/2. Its function is as follows. Catalyzes the reversible reaction in which hydroxymethyl group from 5,10-methylenetetrahydrofolate is transferred onto alpha-ketoisovalerate to form ketopantoate. The protein is 3-methyl-2-oxobutanoate hydroxymethyltransferase of Salinibacter ruber (strain DSM 13855 / M31).